The sequence spans 182 residues: Gremlin-1 (182 aa).

The signal sequence occupies residues 1 to 24; sequence MNCLVYALGSLFLLSGLLLPSSEG. The interval 23-65 is disordered; that stretch reads EGKKKVSGSQGAIPPPDKGQPNDSEQGQAQPGDRVRGKGKGQA. A glycan (N-linked (GlcNAc...) asparagine) is linked at Asn-44. Disulfide bonds link Cys-92/Cys-142, Cys-106/Cys-156, Cys-116/Cys-174, and Cys-120/Cys-176. The CTCK domain occupies 92 to 182; it reads CKTQPLKQTI…QCRCISIDLD (91 aa).

It belongs to the DAN family.

The protein localises to the secreted. Cytokine that has an axial patterning activity. Acts like BMP antagonist in embryonic explants. Blocks the BMP2 activity. The protein is Gremlin-1 (grem1) of Xenopus laevis (African clawed frog).